The following is a 450-amino-acid chain: UDP-N-acetylmuramoylalanine--D-glutamate ligase (450 aa).

119 to 125 (GSNGKTT) contributes to the ATP binding site.

This sequence belongs to the MurCDEF family.

The protein localises to the cytoplasm. The catalysed reaction is UDP-N-acetyl-alpha-D-muramoyl-L-alanine + D-glutamate + ATP = UDP-N-acetyl-alpha-D-muramoyl-L-alanyl-D-glutamate + ADP + phosphate + H(+). The protein operates within cell wall biogenesis; peptidoglycan biosynthesis. Cell wall formation. Catalyzes the addition of glutamate to the nucleotide precursor UDP-N-acetylmuramoyl-L-alanine (UMA). This Streptococcus pneumoniae (strain JJA) protein is UDP-N-acetylmuramoylalanine--D-glutamate ligase.